The sequence spans 1229 residues: MSELKAPSLQSLLESERGSTDSLLAESLQLDFEDLDDAEFAIPPTDVLPTLEAVLSEFEADSDVASEFGMPVPHATPTPSIGEDSTIRTDGRGGGGSIMRYTLLHGISAQLSSAAERVNAGAASSCAVAAFIAIGTSHGHILNFDVTQTLRWAHQDKHGQGAVASLAFNADSTRLLAGFSRGLVAMLDTHTGDVLRELFDVITPNTGVLHVKWTSRSSLALCADAGGSVWSLSFTRKLGIRGCQSRCLFSGARGEVCAVEPLIMDSQGRHELDQYCIVALATLSKYFIVTVRPRLRVIKYHVLQGPPDCLPLLAWHLVLIQAADTSRSVDPVIVVGRGNQLFFHQLFVSNGRITLLYLRHVQLQGSLLSAHWLGPKCVASLDTAEILHLVDVRSSKELECMDMANAGLVYGSAQFKGLATGGNVSPAFALAGSNACYNSVVSRGTQLYVLGARSLHIIGVRTWSERISFLVKHHRWQEACQLALDGYIASVDRPRKRAQAKERIIMLFKEYIANSARAPEYCLGAIVNCLITVGELDLLWTQLWEKLHNSSTELFLQHISEHIEKETIHSVNPVISQALVDYWLEHSPAKLEQLILKLDWMCLDLNQVLKAVKKHRLFRAQIYLNTQALNDYTAALTELLPLVTPDETDLGNCLLVYVSSCLAGREYPSGEIPVELVHQVKHDVLRCLTSQHSKENAGDELPYPYLRALLKFDTRETLNVISLAFQEREFSNELGISHRKRIINLLLEIMSPENATWAEIGCLLNFIAQQISMQCLPRDRQLLERVLSHLAQEEIANESSRQHSERENAWHELLSSNCLAEISSDEEQLRLAEKAKCYCVVEYLLEKLERYDTILDSYIRNEARHETMFAYMERHVASPKRSIFRQLKRNLRELLTINAKETTRLLSLHYPEKINELLDNLRREENLLYLFLKCLNDRKSELEASQMELLLELYCKMESSSTVEEFLRSNSGYRLENAIAIAESHHLNRSVIYLYEKQESYAKAFELSMELLKSAAGEEAAKEAQTISALLARSVETLPAQELERCWFALLQYILPHQELQSITKSLLHEASQHIDLHNLVQLIMNTHNVSTSFGDIKDLLMGMLDSSRHKTEALRASAGALCQDLHLKFVKRYQHAHRGLWVTTTKCSMCRQRLYDHSQVLIFGGCGHGIHEQCMEESETQFEECPRCFTAIPDQSIGLPRPNKNLISISSSLEMGALQLKAPPRRFI.

Residues 67–89 form a disordered region; it reads EFGMPVPHATPTPSIGEDSTIRT. One copy of the CHCR repeat lies at 901–1063; sequence ETTRLLSLHY…ILPHQELQSI (163 aa). Residues 1148-1189 form an RING-type; atypical zinc finger; that stretch reads CSMCRQRLYDHSQVLIFGGCGHGIHEQCMEESETQFEECPRC.

Belongs to the VPS8 family. Component of the class C core vacuole/endosome tethering (CORVET) complex composed of at least Vps8, dor/Vps18, car/Vps33A and Vps16A; unlike in other species, Vps11 is not part of the Drosophila complex. Due to the reduced number of components the Drosophila CORVET complex is often referred to as the miniCORVET complex. Has a higher affinity than the homotypic fusion and vacuole protein sorting (HOPS) tethering complex-specific component lt/Vps41 for Vps16A, car/Vps33A and dor/Vps18, the core components shared by both tethering complexes.

Its subcellular location is the early endosome. In terms of biological role, part of the class C core vacuole/endosome tethering (CORVET) complex involved in endo-lysosomal vesicle trafficking and lysosome biogenesis by facilitating docking and fusion of endosomal vesicles. The CORVET complex acts upstream of the homotypic fusion and vacuole protein sorting (HOPS) tethering complex but is not involved in autophagic flux. The CORVET complex may cooperate with the early endosomal tether Rbsn-5 to mediate endosomal fusion. As part of the CORVET complex recruited to endosomes by activated GTP-bound Rab5. Specifically required for endocytic trafficking in a subset of cells, such as hemocytes and nephrocytes, which are highly active in endocytosis. This Drosophila melanogaster (Fruit fly) protein is Vacuolar protein sorting-associated protein 8 homolog.